A 590-amino-acid polypeptide reads, in one-letter code: Aspartate--tRNA(Asp/Asn) ligase (590 aa).

Position 172 (Glu-172) interacts with L-aspartate. The aspartate stretch occupies residues 196–199; the sequence is QLFK. Arg-218 serves as a coordination point for L-aspartate. Residues 218–220 and Gln-227 each bind ATP; that span reads RDE. An L-aspartate-binding site is contributed by His-449. An ATP-binding site is contributed by Glu-484. Arg-491 lines the L-aspartate pocket. Position 536 to 539 (536 to 539) interacts with ATP; sequence GVDR.

Belongs to the class-II aminoacyl-tRNA synthetase family. Type 1 subfamily. As to quaternary structure, homodimer.

Its subcellular location is the cytoplasm. The catalysed reaction is tRNA(Asx) + L-aspartate + ATP = L-aspartyl-tRNA(Asx) + AMP + diphosphate. Functionally, aspartyl-tRNA synthetase with relaxed tRNA specificity since it is able to aspartylate not only its cognate tRNA(Asp) but also tRNA(Asn). Reaction proceeds in two steps: L-aspartate is first activated by ATP to form Asp-AMP and then transferred to the acceptor end of tRNA(Asp/Asn). The sequence is that of Aspartate--tRNA(Asp/Asn) ligase from Francisella tularensis subsp. holarctica (strain FTNF002-00 / FTA).